The primary structure comprises 170 residues: 4-hydroxyphenylacetate 3-monooxygenase reductase component (170 aa).

It belongs to the non-flavoprotein flavin reductase family. HpaC subfamily. Homodimer. 4-HPA 3-monooxygenase consists of a reductase component HpaC and an oxygenase component HpaB.

The catalysed reaction is a reduced flavin + NAD(+) = an oxidized flavin + NADH + 2 H(+). Its pathway is aromatic compound metabolism; 4-hydroxyphenylacetate degradation; pyruvate and succinate semialdehyde from 4-hydroxyphenylacetate: step 1/7. Functionally, catalyzes the reduction of free flavins (FMN, FAD and riboflavin) by NADH. Subsequently, the reduced flavins diffuse to the large HpaB component or to other electron acceptors such as cytochrome c and Fe(3+) ion. The protein is 4-hydroxyphenylacetate 3-monooxygenase reductase component (hpaC) of Escherichia coli.